A 214-amino-acid polypeptide reads, in one-letter code: MASLFKKKTVDDIIKEQNRELRGTQRTITRDRAALEKQERQLELEIKKMAKTGNKEACKVLAKQLVQLRKQKNRTYAVSSKVTSMSTQTKVMNSQMKMAGAMSTTAKTMQAVNKKMDPQKTLQTMQNFQKENMKMEMTEEMINDTLDDIFDASDEEEESQDIVNQVLDEIGIEISGKMAKAPSAARGLPSASTSKASTISDEEIERQLKALGVD.

Residues 25 to 55 (QRTITRDRAALEKQERQLELEIKKMAKTGNK) adopt a coiled-coil conformation. The interval 179 to 201 (AKAPSAARGLPSASTSKASTISD) is disordered. Over residues 190–199 (SASTSKASTI) the composition is skewed to polar residues. Residues 202-212 (EEIERQLKALG) carry the MIT-interacting motif motif.

The protein belongs to the SNF7 family. In terms of assembly, probable core component of the endosomal sorting required for transport complex III (ESCRT-III). ESCRT-III components are thought to multimerize to form a flat lattice on the perimeter membrane of the endosome.

The protein localises to the cytoplasm. It is found in the cytosol. It localises to the late endosome membrane. Its function is as follows. Probable core component of the endosomal sorting required for transport complex III (ESCRT-III) which is involved in multivesicular bodies (MVBs) formation and sorting of endosomal cargo proteins into MVBs. MVBs contain intraluminal vesicles (ILVs) that are generated by invagination and scission from the limiting membrane of the endosome and mostly are delivered to lysosomes enabling degradation of membrane proteins, such as stimulated growth factor receptors, lysosomal enzymes and lipids. The sequence is that of Charged multivesicular body protein 2b (CHMP2B) from Gallus gallus (Chicken).